The sequence spans 842 residues: Translation initiation factor IF-2 (842 aa).

Disordered regions lie at residues 1–41 (MVAK…GFPD) and 112–219 (RPNR…QTYQ). 2 stretches are compositionally biased toward basic and acidic residues: residues 32–41 (PEDKKQGFPD) and 153–165 (RRGEGRPFARDFS). Residues 328 to 497 (ARPPVVTVMG…MLQAEVMELR (170 aa)) enclose the tr-type G domain. Residues 337 to 344 (GHVDHGKT) form a G1 region. 337–344 (GHVDHGKT) serves as a coordination point for GTP. Residues 362–366 (GITQH) form a G2 region. Positions 383–386 (DTPG) are G3. GTP is bound by residues 383–387 (DTPGH) and 437–440 (NKID). The interval 437–440 (NKID) is G4. Residues 473–475 (SAL) are G5.

It belongs to the TRAFAC class translation factor GTPase superfamily. Classic translation factor GTPase family. IF-2 subfamily.

The protein localises to the cytoplasm. In terms of biological role, one of the essential components for the initiation of protein synthesis. Protects formylmethionyl-tRNA from spontaneous hydrolysis and promotes its binding to the 30S ribosomal subunits. Also involved in the hydrolysis of GTP during the formation of the 70S ribosomal complex. The sequence is that of Translation initiation factor IF-2 (infB) from Treponema pallidum (strain Nichols).